A 326-amino-acid polypeptide reads, in one-letter code: Tagatose 1,6-diphosphate aldolase (326 aa).

This sequence belongs to the aldolase LacD family.

The enzyme catalyses D-tagatofuranose 1,6-bisphosphate = D-glyceraldehyde 3-phosphate + dihydroxyacetone phosphate. It participates in carbohydrate metabolism; D-tagatose 6-phosphate degradation; D-glyceraldehyde 3-phosphate and glycerone phosphate from D-tagatose 6-phosphate: step 2/2. This is Tagatose 1,6-diphosphate aldolase from Streptococcus pneumoniae (strain ATCC BAA-255 / R6).